We begin with the raw amino-acid sequence, 219 residues long: Transmembrane protein 179B (219 aa).

4 consecutive transmembrane segments (helical) span residues 6–26 (PLLL…ITAA), 69–89 (ISVC…YIAF), 105–125 (LGLS…LKIG), and 167–187 (AETA…LVLI). Positions 195–219 (IRPGTEDPSAPPSETEPFFNRPGRP) are disordered.

Belongs to the TMEM179 family.

It is found in the membrane. The chain is Transmembrane protein 179B (tmem179b) from Danio rerio (Zebrafish).